We begin with the raw amino-acid sequence, 243 residues long: ATP synthase subunit a (243 aa).

7 helical membrane passes run 29-49 (NASL…YIGL), 54-74 (ILPN…VSTI), 89-109 (VFTI…PLGF), 114-134 (HIAV…AIGF), 144-164 (ILLP…IELF), 182-202 (IAGH…NIFL), and 208-228 (AFII…AYIF).

It belongs to the ATPase A chain family. F-type ATPases have 2 components, CF(1) - the catalytic core - and CF(0) - the membrane proton channel. CF(1) has five subunits: alpha(3), beta(3), gamma(1), delta(1), epsilon(1). CF(0) has three main subunits: a(1), b(2) and c(9-12). The alpha and beta chains form an alternating ring which encloses part of the gamma chain. CF(1) is attached to CF(0) by a central stalk formed by the gamma and epsilon chains, while a peripheral stalk is formed by the delta and b chains.

It is found in the cell inner membrane. Functionally, key component of the proton channel; it plays a direct role in the translocation of protons across the membrane. This is ATP synthase subunit a from Ehrlichia chaffeensis (strain ATCC CRL-10679 / Arkansas).